An 80-amino-acid chain; its full sequence is Spermatid-specific protein S2 (80 aa).

Positions 1 to 36 are enriched in basic residues; it reads VKSRYHQRQYRARKRYAKARRTKKPKRRPKPPRKLR. The interval 1 to 44 is disordered; sequence VKSRYHQRQYRARKRYAKARRTKKPKRRPKPPRKLRYAPSKKQP.

It localises to the nucleus. Its subcellular location is the chromosome. Its function is as follows. Involved in nuclear basic protein transition: histones are replaced by spermatid specific proteins which are themselves replaced by protamines in late spermatids. The protein is Spermatid-specific protein S2 of Scyliorhinus canicula (Small-spotted catshark).